A 477-amino-acid polypeptide reads, in one-letter code: Putative BTB/POZ domain-containing protein R830 (477 aa).

The BTB domain maps to 13–83; sequence SDLELILVDK…FYGIETNNDP (71 aa).

The protein belongs to the mimivirus BTB/WD family.

This Acanthamoeba polyphaga mimivirus (APMV) protein is Putative BTB/POZ domain-containing protein R830.